Consider the following 440-residue polypeptide: MKNYLSFGMFALLFALTFGTVKPVQAIAGPEWLLGRPSVNNSQLVVSVAGTVEGTNQEISLKFFEIDLTSRPAQGGKTEQGLRPKSKPLATDKGAMSHKLEKADLLKAIQEQLIANVHSNDGYFEVIDFASDATITDRNGKVYFADRDDSVTLPTQPVQEFLLSGHVRVRPYRPKAVHNSAERVNVNYEVSFVSETGNLDFTPSLKEQYHLTTLAVGDSLSSQELAAIAQFILSKKHPDYIITKRDSSIVTHDNDIFRTILPMDQEFTYHIKDREQAYKANSKTGIEEKTNNTDLISEKYYILKKGEKPYDPFDRSHLKLFTIKYVDVDTKALLKSEQLLTASERNLDFRDLYDPRDKAKLLYNNLDAFGIMGYTLTGKVEDNHDDTNRIITVYMGKRPEGENASYHLAYDKDRYTEEEREVYSYLRDTGTPIPDNPKDK.

An N-terminal signal peptide occupies residues 1–26 (MKNYLSFGMFALLFALTFGTVKPVQA). The tract at residues 72 to 94 (PAQGGKTEQGLRPKSKPLATDKG) is disordered.

Functionally, this protein is not a protease, but it activates plasminogen by complexing with it. As a potential virulence factor, it is thought to prevent the formation of effective fibrin barriers around the site of infection, thereby contributing to the invasiveness of the cells. The sequence is that of Streptokinase (ska) from Streptococcus pyogenes.